The chain runs to 447 residues: Methylenetetrahydrofolate--tRNA-(uracil-5-)-methyltransferase TrmFO (447 aa).

13–18 (GAGLAG) is a binding site for FAD.

Belongs to the MnmG family. TrmFO subfamily. It depends on FAD as a cofactor.

Its subcellular location is the cytoplasm. It carries out the reaction uridine(54) in tRNA + (6R)-5,10-methylene-5,6,7,8-tetrahydrofolate + NADH + H(+) = 5-methyluridine(54) in tRNA + (6S)-5,6,7,8-tetrahydrofolate + NAD(+). The catalysed reaction is uridine(54) in tRNA + (6R)-5,10-methylene-5,6,7,8-tetrahydrofolate + NADPH + H(+) = 5-methyluridine(54) in tRNA + (6S)-5,6,7,8-tetrahydrofolate + NADP(+). In terms of biological role, catalyzes the folate-dependent formation of 5-methyl-uridine at position 54 (M-5-U54) in all tRNAs. The chain is Methylenetetrahydrofolate--tRNA-(uracil-5-)-methyltransferase TrmFO from Streptococcus thermophilus (strain ATCC BAA-491 / LMD-9).